Here is a 273-residue protein sequence, read N- to C-terminus: F-actin-capping protein subunit alpha (273 aa).

The protein belongs to the F-actin-capping protein alpha subunit family. Component of the F-actin capping complex, composed of a heterodimer of an alpha and a beta subunit.

Its subcellular location is the cytoplasm. The protein resides in the cytoskeleton. It localises to the actin patch. In terms of biological role, F-actin-capping proteins bind in a Ca(2+)-independent manner to the fast growing ends of actin filaments (barbed end) thereby blocking the exchange of subunits at these ends. Unlike other capping proteins (such as gelsolin and severin), these proteins do not sever actin filaments. The sequence is that of F-actin-capping protein subunit alpha (fac-1) from Neurospora crassa (strain ATCC 24698 / 74-OR23-1A / CBS 708.71 / DSM 1257 / FGSC 987).